We begin with the raw amino-acid sequence, 328 residues long: Peroxidase 25 (328 aa).

The N-terminal stretch at 1 to 26 (MGVYLGKYCYIMIIMLVLVLGKEVRS) is a signal peptide. Cystine bridges form between Cys38–Cys114, Cys71–Cys76, Cys120–Cys324, and Cys198–Cys230. The active-site Proton acceptor is His69. Positions 70, 73, 75, 77, and 79 each coordinate Ca(2+). Pro161 serves as a coordination point for substrate. A heme b-binding site is contributed by His191. Ca(2+) is bound at residue Thr192. N-linked (GlcNAc...) asparagine glycosylation is present at Asn207. Positions 243, 246, and 251 each coordinate Ca(2+).

Belongs to the peroxidase family. Classical plant (class III) peroxidase subfamily. Heme b is required as a cofactor. The cofactor is Ca(2+).

Its subcellular location is the secreted. It carries out the reaction 2 a phenolic donor + H2O2 = 2 a phenolic radical donor + 2 H2O. Functionally, removal of H(2)O(2), oxidation of toxic reductants, biosynthesis and degradation of lignin, suberization, auxin catabolism, response to environmental stresses such as wounding, pathogen attack and oxidative stress. These functions might be dependent on each isozyme/isoform in each plant tissue. This chain is Peroxidase 25 (PER25), found in Arabidopsis thaliana (Mouse-ear cress).